The chain runs to 297 residues: UDP-N-acetylglucosamine transporter TMEM241 (297 aa).

Helical transmembrane passes span 7–29 (LLGL…VLSV), 32–52 (FTYP…LLHM), 69–89 (VLIW…GSKA), 93–113 (LAVP…CGYQ), 121–141 (TSLS…CLPF), 146–166 (FDPD…SYKI), 187–207 (IFSM…FGAL), 211–231 (FLYF…GFFL), 250–270 (WILC…DMAL), and 271–291 (TKAT…LVFS).

Belongs to the nucleotide-sugar transporter family. SLC35A subfamily. Widely expressed with high expression in lung.

Its subcellular location is the golgi apparatus. The protein localises to the cis-Golgi network membrane. Golgi-localized UDP-N-acetylglucosamine (UDP-GlcNAc) transporter that transports UDP-N-acetylglucosamine into Golgi lumen. Contributes to lysosomal targeting of NPC2, a key protein required for lysosomal cholesterol exiting, and that utilizes the mannose-6-phosphate (M6P) modification pathway for its lysosomal targeting. The protein is UDP-N-acetylglucosamine transporter TMEM241 (Tmem241) of Mus musculus (Mouse).